The primary structure comprises 206 residues: MARYLGPKCKLSRREGCDLLLKSGVRDHKSKCKSEKLPGQHGDKKPRLNSYGIQLREKQKIRRLYGILEKQFRNYYKKAARQKGSTGENLMALLERRLDNVVYRMGFASTRAEARQLVAHKAILVNDKVVNVPSFLVNPGDTISVRQKAKNQGRIQAALALSEQRAPCDWITVDTGSFKGTFSTAPTLMDLSSDYNVNLVVELYSK.

Residues 96–161 (RRLDNVVYRM…QGRIQAALAL (66 aa)) enclose the S4 RNA-binding domain.

This sequence belongs to the universal ribosomal protein uS4 family. Part of the 30S ribosomal subunit. Contacts protein S5. The interaction surface between S4 and S5 is involved in control of translational fidelity.

In terms of biological role, one of the primary rRNA binding proteins, it binds directly to 16S rRNA where it nucleates assembly of the body of the 30S subunit. Its function is as follows. With S5 and S12 plays an important role in translational accuracy. The sequence is that of Small ribosomal subunit protein uS4 from Legionella pneumophila (strain Paris).